The sequence spans 665 residues: GTPase IMAP family member 8 (665 aa).

The region spanning 8 to 210 (MSELRLLLLG…HVNFKTEGSR (203 aa)) is the AIG1-type G 1 domain. Residues 17-24 (GKCRSGKS) are G1. GTP-binding positions include 17 to 25 (GKCRSGKSA) and Ser38. The segment at 44 to 48 (TVIKM) is G2. Residues 65-68 (DTPD) form a G3 region. Positions 134–137 (TRKD) are G4. GTP-binding positions include 135-137 (RKD) and Asn170. A G5 region spans residues 169–171 (NNK). The tract at residues 217–246 (EAASQEGDKPQGPRERQLQSTGPEQNPGTS) is disordered. Positions 222–233 (EGDKPQGPRERQ) are enriched in basic and acidic residues. The segment covering 234 to 246 (LQSTGPEQNPGTS) has biased composition (polar residues). AIG1-type G domains are found at residues 245–435 (TSEL…VFRE) and 436–644 (KETL…SKLI). Coiled-coil stretches lie at residues 400 to 427 (NYRA…HQNG) and 608 to 657 (QAQE…EKLL).

It belongs to the TRAFAC class TrmE-Era-EngA-EngB-Septin-like GTPase superfamily. AIG1/Toc34/Toc159-like paraseptin GTPase family. IAN subfamily. As to expression, expressed in the spleen, intestine, liver, and colon, as well as in lung, placenta, kidney, muscle, and heart. Extremely low expression, if any, in brain, in thymus, bone marrow, and blood leukocytes. Detected in T-cells.

The protein resides in the endoplasmic reticulum. The protein localises to the golgi apparatus. It localises to the mitochondrion. It is found in the cytoplasm. Its subcellular location is the cytosol. Functionally, exerts an anti-apoptotic effect in the immune system and is involved in responses to infections. This is GTPase IMAP family member 8 (GIMAP8) from Homo sapiens (Human).